The chain runs to 141 residues: Protein X (141 aa).

The interval 24–52 (QSSGPPFPRPAAGSAASSTSSPSPSDESD) is disordered. Low complexity predominate over residues 33–48 (PAAGSAASSTSSPSPS). The interval 68 to 113 (PCCLVFTCADLRTMDSTVNFVSWHAKRQLGMPSKDLWTPYIKDQLL) is mitochondrial targeting sequence.

The protein belongs to the orthohepadnavirus protein X family. In terms of assembly, may form homodimer. May interact with host CEBPA, CFLAR, CREB1, DDB1, E4F1, HBXIP, HSPD1/HSP60, NFKBIA, POLR2E and SMAD4. Interacts with host SMC5-SMC6 complex and induces its degradation. Interacts with host TRPC4AP; leading to prevent ubiquitination of TRPC4AP. Interacts with host PLSCR1; this interaction promotes ubiquitination and degradation of HBx and impairs HBx-mediated cell proliferation. In terms of processing, a fraction may be phosphorylated in insect cells and HepG2 cells, a human hepatoblastoma cell line. Phosphorylated in vitro by host protein kinase C or mitogen-activated protein kinase. N-acetylated in insect cells.

The protein resides in the host cytoplasm. Its subcellular location is the host nucleus. It localises to the host mitochondrion. Its function is as follows. Multifunctional protein that plays a role in silencing host antiviral defenses and promoting viral transcription. Does not seem to be essential for HBV infection. May be directly involved in development of cirrhosis and liver cancer (hepatocellular carcinoma). Most of cytosolic activities involve modulation of cytosolic calcium. The effect on apoptosis is controversial depending on the cell types in which the studies have been conducted. May induce apoptosis by localizing in mitochondria and causing loss of mitochondrial membrane potential. May also modulate apoptosis by binding host CFLAR, a key regulator of the death-inducing signaling complex (DISC). Promotes viral transcription by using the host E3 ubiquitin ligase DDB1 to target the SMC5-SMC6 complex to proteasomal degradation. This host complex would otherwise bind to viral episomal DNA, and prevents its transcription. Moderately stimulates transcription of many different viral and cellular transcription elements. Promoters and enhancers stimulated by HBx contain DNA binding sites for NF-kappa-B, AP-1, AP-2, c-EBP, ATF/CREB, or the calcium-activated factor NF-AT. This is Protein X from Marmota monax (Woodchuck).